A 97-amino-acid polypeptide reads, in one-letter code: Co-chaperonin GroES (97 aa).

This sequence belongs to the GroES chaperonin family. In terms of assembly, heptamer of 7 subunits arranged in a ring. Interacts with the chaperonin GroEL.

Its subcellular location is the cytoplasm. In terms of biological role, together with the chaperonin GroEL, plays an essential role in assisting protein folding. The GroEL-GroES system forms a nano-cage that allows encapsulation of the non-native substrate proteins and provides a physical environment optimized to promote and accelerate protein folding. GroES binds to the apical surface of the GroEL ring, thereby capping the opening of the GroEL channel. In Pseudomonas putida (strain W619), this protein is Co-chaperonin GroES.